We begin with the raw amino-acid sequence, 431 residues long: Trigger factor (431 aa).

Residues 161 to 246 (DDRVTIDFVG…LKKVENIVLP (86 aa)) enclose the PPIase FKBP-type domain.

Belongs to the FKBP-type PPIase family. Tig subfamily.

It is found in the cytoplasm. It carries out the reaction [protein]-peptidylproline (omega=180) = [protein]-peptidylproline (omega=0). Its function is as follows. Involved in protein export. Acts as a chaperone by maintaining the newly synthesized protein in an open conformation. Functions as a peptidyl-prolyl cis-trans isomerase. The sequence is that of Trigger factor from Glaesserella parasuis serovar 5 (strain SH0165) (Haemophilus parasuis).